Reading from the N-terminus, the 670-residue chain is DNA ligase (670 aa).

NAD(+)-binding positions include 32 to 36 (DSEYD), 81 to 82 (SL), and Glu-114. The active-site N6-AMP-lysine intermediate is the Lys-116. Arg-137, Glu-174, Lys-291, and Lys-315 together coordinate NAD(+). 4 residues coordinate Zn(2+): Cys-409, Cys-412, Cys-427, and Cys-433. The 79-residue stretch at 592–670 (ASENLFKDKT…EEEFLAQITR (79 aa)) folds into the BRCT domain.

It belongs to the NAD-dependent DNA ligase family. LigA subfamily. The cofactor is Mg(2+). Mn(2+) serves as cofactor.

It carries out the reaction NAD(+) + (deoxyribonucleotide)n-3'-hydroxyl + 5'-phospho-(deoxyribonucleotide)m = (deoxyribonucleotide)n+m + AMP + beta-nicotinamide D-nucleotide.. Its function is as follows. DNA ligase that catalyzes the formation of phosphodiester linkages between 5'-phosphoryl and 3'-hydroxyl groups in double-stranded DNA using NAD as a coenzyme and as the energy source for the reaction. It is essential for DNA replication and repair of damaged DNA. This is DNA ligase from Haemophilus influenzae (strain 86-028NP).